A 160-amino-acid chain; its full sequence is Large ribosomal subunit protein uL22c (160 aa).

The protein belongs to the universal ribosomal protein uL22 family. Part of the 50S ribosomal subunit.

It localises to the plastid. Its subcellular location is the chloroplast. Its function is as follows. This protein binds specifically to 23S rRNA. In terms of biological role, the globular domain of the protein is located near the polypeptide exit tunnel on the outside of the subunit, while an extended beta-hairpin is found that lines the wall of the exit tunnel in the center of the 70S ribosome. The chain is Large ribosomal subunit protein uL22c (rpl22) from Olimarabidopsis pumila (Dwarf rocket).